A 341-amino-acid chain; its full sequence is L-threonine 3-dehydrogenase (341 aa).

Residue cysteine 38 participates in Zn(2+) binding. Catalysis depends on charge relay system residues threonine 40 and histidine 43. Zn(2+) is bound by residues histidine 63, glutamate 64, cysteine 93, cysteine 96, cysteine 99, and cysteine 107. Residues isoleucine 175, aspartate 195, arginine 200, 262–264 (LGI), and 286–287 (IY) each bind NAD(+).

It belongs to the zinc-containing alcohol dehydrogenase family. Homotetramer. Zn(2+) serves as cofactor.

Its subcellular location is the cytoplasm. It carries out the reaction L-threonine + NAD(+) = (2S)-2-amino-3-oxobutanoate + NADH + H(+). The protein operates within amino-acid degradation; L-threonine degradation via oxydo-reductase pathway; glycine from L-threonine: step 1/2. Functionally, catalyzes the NAD(+)-dependent oxidation of L-threonine to 2-amino-3-ketobutyrate. The polypeptide is L-threonine 3-dehydrogenase (Shewanella frigidimarina (strain NCIMB 400)).